We begin with the raw amino-acid sequence, 85 residues long: UPF0291 protein SSA_1878 (85 aa).

The segment at 58-85 is disordered; that stretch reads GNDVTPEKLRQVQREKGLHGRSLDDPES. Basic and acidic residues predominate over residues 62 to 85; sequence TPEKLRQVQREKGLHGRSLDDPES.

This sequence belongs to the UPF0291 family.

It is found in the cytoplasm. This chain is UPF0291 protein SSA_1878, found in Streptococcus sanguinis (strain SK36).